Reading from the N-terminus, the 334-residue chain is Anthranilate phosphoribosyltransferase (334 aa).

5-phospho-alpha-D-ribose 1-diphosphate contacts are provided by residues Gly81, 84-85 (GD), Thr89, 91-94 (NIST), 109-117 (KHGNRSVSS), and Ala121. Residue Gly81 coordinates anthranilate. Position 93 (Ser93) interacts with Mg(2+). Asn112 provides a ligand contact to anthranilate. Position 167 (Arg167) interacts with anthranilate. Residues Asp225 and Glu226 each contribute to the Mg(2+) site.

Belongs to the anthranilate phosphoribosyltransferase family. Homodimer. Requires Mg(2+) as cofactor.

The enzyme catalyses N-(5-phospho-beta-D-ribosyl)anthranilate + diphosphate = 5-phospho-alpha-D-ribose 1-diphosphate + anthranilate. It functions in the pathway amino-acid biosynthesis; L-tryptophan biosynthesis; L-tryptophan from chorismate: step 2/5. Its function is as follows. Catalyzes the transfer of the phosphoribosyl group of 5-phosphorylribose-1-pyrophosphate (PRPP) to anthranilate to yield N-(5'-phosphoribosyl)-anthranilate (PRA). This is Anthranilate phosphoribosyltransferase from Histophilus somni (strain 2336) (Haemophilus somnus).